The primary structure comprises 105 residues: Thioredoxin (105 aa).

A Thioredoxin domain is found at 2–105; sequence VKQIESKYAF…KLEATINELI (104 aa). The residue at position 3 (Lys3) is an N6-acetyllysine. The residue at position 8 (Lys8) is an N6-succinyllysine. Active-site nucleophile residues include Cys32 and Cys35. Cys32 and Cys35 are joined by a disulfide. Lys39 carries the N6-acetyllysine modification. S-nitrosocysteine occurs at positions 62 and 69. An S-nitrosocysteine; alternate modification is found at Cys73. N6-acetyllysine; alternate is present on Lys94. An N6-succinyllysine; alternate modification is found at Lys94.

It belongs to the thioredoxin family. In terms of assembly, homodimer; disulfide-linked. Interacts with TXNIP through the redox-active site. Interacts with MAP3K5 and CASP3. Interacts with APEX1; the interaction stimulates the FOS/JUN AP-1 DNA-binding activity in a redox-dependent manner. In terms of processing, in the fully reduced protein, both Cys-69 and Cys-73 are nitrosylated in response to nitric oxide (NO). When two disulfide bonds are present in the protein, only Cys-73 is nitrosylated. Cys-73 can serve as donor for nitrosylation of target proteins.

It localises to the nucleus. Its subcellular location is the cytoplasm. It is found in the secreted. In terms of biological role, participates in various redox reactions through the reversible oxidation of its active center dithiol to a disulfide and catalyzes dithiol-disulfide exchange reactions. Plays a role in the reversible S-nitrosylation of cysteine residues in target proteins, and thereby contributes to the response to intracellular nitric oxide. Nitrosylates the active site Cys of CASP3 in response to nitric oxide (NO), and thereby inhibits caspase-3 activity. Induces the FOS/JUN AP-1 DNA binding activity in ionizing radiation (IR) cells through its oxidation/reduction status and stimulates AP-1 transcriptional activity. The protein is Thioredoxin (TXN) of Ovis aries (Sheep).